Reading from the N-terminus, the 506-residue chain is Apolipoprotein N-acyltransferase (506 aa).

Transmembrane regions (helical) follow at residues 26–46, 66–86, 89–109, 113–133, 166–186, and 192–212; these read FAPY…LILI, FASG…MPLA, LFLM…FTWS, FFAK…WLIA, GVEL…YAVI, and MLLI…WDWV. The 247-residue stretch at 225–471 folds into the CN hydrolase domain; the sequence is IQGNVDQNLK…TAVLRAELTP (247 aa). The active-site Proton acceptor is the glutamate 264. Lysine 330 is an active-site residue. The active-site Nucleophile is the cysteine 382. The chain crosses the membrane as a helical span at residues 479–499; that stretch reads HQLGSWPLYIWVALSLALAWW.

This sequence belongs to the CN hydrolase family. Apolipoprotein N-acyltransferase subfamily.

The protein localises to the cell inner membrane. The catalysed reaction is N-terminal S-1,2-diacyl-sn-glyceryl-L-cysteinyl-[lipoprotein] + a glycerophospholipid = N-acyl-S-1,2-diacyl-sn-glyceryl-L-cysteinyl-[lipoprotein] + a 2-acyl-sn-glycero-3-phospholipid + H(+). Its pathway is protein modification; lipoprotein biosynthesis (N-acyl transfer). Catalyzes the phospholipid dependent N-acylation of the N-terminal cysteine of apolipoprotein, the last step in lipoprotein maturation. This chain is Apolipoprotein N-acyltransferase, found in Vibrio vulnificus (strain CMCP6).